A 209-amino-acid chain; its full sequence is Ribonuclease HII (209 aa).

Residues Gly-19 to Ala-208 enclose the RNase H type-2 domain. Residues Asp-25, Glu-26, and Asp-117 each coordinate a divalent metal cation.

The protein belongs to the RNase HII family. The cofactor is Mn(2+). It depends on Mg(2+) as a cofactor.

It localises to the cytoplasm. It carries out the reaction Endonucleolytic cleavage to 5'-phosphomonoester.. Its function is as follows. Endonuclease that specifically degrades the RNA of RNA-DNA hybrids. This chain is Ribonuclease HII, found in Acidovorax ebreus (strain TPSY) (Diaphorobacter sp. (strain TPSY)).